The following is a 147-amino-acid chain: Two-component response regulator ORR11 (147 aa).

Positions 29-146 constitute a Response regulatory domain; it reads HVLAVDDSSV…DVSRLFSRVL (118 aa). Aspartate 79 is subject to 4-aspartylphosphate.

The protein belongs to the ARR family. Type-A subfamily. Post-translationally, two-component system major event consists of a His-to-Asp phosphorelay between a sensor histidine kinase (HK) and a response regulator (RR). In plants, the His-to-Asp phosphorelay involves an additional intermediate named Histidine-containing phosphotransfer protein (HPt). This multistep phosphorelay consists of a His-Asp-His-Asp sequential transfer of a phosphate group between first a His and an Asp of the HK protein, followed by the transfer to a conserved His of the HPt protein and finally the transfer to an Asp in the receiver domain of the RR protein.

Functionally, functions as a response regulator involved in His-to-Asp phosphorelay signal transduction system. Phosphorylation of the Asp residue in the receiver domain activates the ability of the protein to promote the transcription of target genes. Type-A response regulators seem to act as negative regulators of the cytokinin signaling. The protein is Two-component response regulator ORR11 of Oryza sativa subsp. indica (Rice).